Consider the following 175-residue polypeptide: Large ribosomal subunit protein uL22 (175 aa).

A disordered region spans residues 113 to 175 (VESRPVKDQR…EASETKGGSD (63 aa)). Residues 136–154 (KTAGRAPAKKAGASSGATK) show a composition bias toward low complexity. Residues 166-175 (EASETKGGSD) are compositionally biased toward basic and acidic residues.

Belongs to the universal ribosomal protein uL22 family. As to quaternary structure, part of the 50S ribosomal subunit.

This protein binds specifically to 23S rRNA; its binding is stimulated by other ribosomal proteins, e.g. L4, L17, and L20. It is important during the early stages of 50S assembly. It makes multiple contacts with different domains of the 23S rRNA in the assembled 50S subunit and ribosome. In terms of biological role, the globular domain of the protein is located near the polypeptide exit tunnel on the outside of the subunit, while an extended beta-hairpin is found that lines the wall of the exit tunnel in the center of the 70S ribosome. This is Large ribosomal subunit protein uL22 from Mycobacterium leprae (strain TN).